The chain runs to 397 residues: CCA-adding enzyme (397 aa).

The ATP site is built by Gly-26 and Arg-29. Residues Gly-26 and Arg-29 each coordinate CTP. Positions 39 and 41 each coordinate Mg(2+). Positions 110, 153, 156, 159, and 162 each coordinate ATP. 5 residues coordinate CTP: Arg-110, Asp-153, Arg-156, Arg-159, and Arg-162.

The protein belongs to the tRNA nucleotidyltransferase/poly(A) polymerase family. Bacterial CCA-adding enzyme type 3 subfamily. Homodimer. It depends on Mg(2+) as a cofactor.

It carries out the reaction a tRNA precursor + 2 CTP + ATP = a tRNA with a 3' CCA end + 3 diphosphate. The enzyme catalyses a tRNA with a 3' CCA end + 2 CTP + ATP = a tRNA with a 3' CCACCA end + 3 diphosphate. Catalyzes the addition and repair of the essential 3'-terminal CCA sequence in tRNAs without using a nucleic acid template. Adds these three nucleotides in the order of C, C, and A to the tRNA nucleotide-73, using CTP and ATP as substrates and producing inorganic pyrophosphate. tRNA 3'-terminal CCA addition is required both for tRNA processing and repair. Also involved in tRNA surveillance by mediating tandem CCA addition to generate a CCACCA at the 3' terminus of unstable tRNAs. While stable tRNAs receive only 3'-terminal CCA, unstable tRNAs are marked with CCACCA and rapidly degraded. The polypeptide is CCA-adding enzyme (Bacillus cereus (strain G9842)).